The sequence spans 134 residues: Perlwapin (134 aa).

3 WAP domains span residues 2–45 (GPNL…CVPK), 46–89 (PKPG…YRPE), and 90–132 (KPGS…EKPC). 12 disulfide bridges follow: C8-C34, C17-C38, C21-C33, C27-C42, C51-C77, C59-C82, C64-C76, C70-C85, C94-C121, C104-C124, C108-C120, and C114-C128.

In terms of tissue distribution, nacreous layer of shell.

Its function is as follows. Inhibits growth of calcium carbonate crystals. May inhibit growth of certain crystallographic planes in the mineral phase of nacre in the shell. In Haliotis laevigata (Smooth Australian abalone), this protein is Perlwapin.